The following is a 187-amino-acid chain: Elongation factor P (187 aa).

Belongs to the elongation factor P family.

Its subcellular location is the cytoplasm. Its pathway is protein biosynthesis; polypeptide chain elongation. Involved in peptide bond synthesis. Stimulates efficient translation and peptide-bond synthesis on native or reconstituted 70S ribosomes in vitro. Probably functions indirectly by altering the affinity of the ribosome for aminoacyl-tRNA, thus increasing their reactivity as acceptors for peptidyl transferase. This is Elongation factor P from Prochlorococcus marinus (strain NATL2A).